Here is a 157-residue protein sequence, read N- to C-terminus: Protein Smg homolog (157 aa).

It belongs to the Smg family.

This is Protein Smg homolog from Shewanella putrefaciens (strain CN-32 / ATCC BAA-453).